A 555-amino-acid polypeptide reads, in one-letter code: Cinnamate beta-D-glucosyltransferase (555 aa).

H19 acts as the Proton acceptor in catalysis. Residue H19 participates in an anthocyanidin binding. 6 residues coordinate UDP-alpha-D-glucose: Q344, H359, W362, N363, S364, and E367. G382 contributes to the an anthocyanidin binding site. 2 residues coordinate UDP-alpha-D-glucose: D383 and Q384.

It belongs to the UDP-glycosyltransferase family. Highest expression detected in fruit, with lower levels detected in flower and petiole. Barely detectable in leaf and root.

It catalyses the reaction (E)-cinnamate + UDP-alpha-D-glucose = 1-O-(trans-cinnamoyl)-beta-D-glucose + UDP. In terms of biological role, broad spectrum multifunctional glucosyltransferase. Catalyzes the formation of cinnamic acid and p-coumaric acid glucose esters during fruit ripening. Accepted substrates range from derivatives of cinnamic acid and benzoic acid to heterocyclic and aliphatic compounds, resulting in the formation of O- and S-glucose esters and O-glucosides. May also be involved in detoxification of xenobiotics. This chain is Cinnamate beta-D-glucosyltransferase, found in Fragaria ananassa (Strawberry).